Reading from the N-terminus, the 966-residue chain is Catenin alpha-2 (966 aa).

A compositionally biased stretch (basic and acidic residues) spans 924-940; the sequence is PEKKPLVKREKPEEYQT. The interval 924–952 is disordered; that stretch reads PEKKPLVKREKPEEYQTRVRRGSQKKHIS. Residues 941 to 951 are compositionally biased toward basic residues; the sequence is RVRRGSQKKHI.

The protein belongs to the vinculin/alpha-catenin family.

It localises to the cell membrane. The protein localises to the cytoplasm. It is found in the cytoskeleton. The protein resides in the cell junction. Its subcellular location is the adherens junction. It localises to the cell projection. The protein localises to the axon. It is found in the nucleus. In terms of biological role, may function as a linker between cadherin adhesion receptors and the cytoskeleton to regulate cell-cell adhesion and differentiation in the nervous system. This chain is Catenin alpha-2 (ctnna2), found in Xenopus tropicalis (Western clawed frog).